The sequence spans 427 residues: Serine--tRNA ligase (427 aa).

L-serine is bound at residue 232 to 234; the sequence is TAE. An ATP-binding site is contributed by 263–265; sequence RSE. Residue Glu-286 participates in L-serine binding. ATP is bound at residue 350 to 353; that stretch reads EISS. Position 385 (Ser-385) interacts with L-serine.

It belongs to the class-II aminoacyl-tRNA synthetase family. Type-1 seryl-tRNA synthetase subfamily. In terms of assembly, homodimer. The tRNA molecule binds across the dimer.

Its subcellular location is the cytoplasm. The catalysed reaction is tRNA(Ser) + L-serine + ATP = L-seryl-tRNA(Ser) + AMP + diphosphate + H(+). The enzyme catalyses tRNA(Sec) + L-serine + ATP = L-seryl-tRNA(Sec) + AMP + diphosphate + H(+). It participates in aminoacyl-tRNA biosynthesis; selenocysteinyl-tRNA(Sec) biosynthesis; L-seryl-tRNA(Sec) from L-serine and tRNA(Sec): step 1/1. Its function is as follows. Catalyzes the attachment of serine to tRNA(Ser). Is also able to aminoacylate tRNA(Sec) with serine, to form the misacylated tRNA L-seryl-tRNA(Sec), which will be further converted into selenocysteinyl-tRNA(Sec). This Lacticaseibacillus casei (strain BL23) (Lactobacillus casei) protein is Serine--tRNA ligase.